We begin with the raw amino-acid sequence, 243 residues long: Probable transcriptional regulatory protein LGAS_1276 (243 aa).

A disordered region spans residues 1–22; that stretch reads MSGHSKWHNIQGRKNAQDAKRG.

This sequence belongs to the TACO1 family.

The protein resides in the cytoplasm. The sequence is that of Probable transcriptional regulatory protein LGAS_1276 from Lactobacillus gasseri (strain ATCC 33323 / DSM 20243 / BCRC 14619 / CIP 102991 / JCM 1131 / KCTC 3163 / NCIMB 11718 / NCTC 13722 / AM63).